The following is a 200-amino-acid chain: Probable molybdenum cofactor guanylyltransferase (200 aa).

GTP contacts are provided by residues 9 to 11 (LAG), Lys21, Asp69, and Asp100. Asp100 is a Mg(2+) binding site.

This sequence belongs to the MobA family. Mg(2+) is required as a cofactor.

The protein localises to the cytoplasm. It catalyses the reaction Mo-molybdopterin + GTP + H(+) = Mo-molybdopterin guanine dinucleotide + diphosphate. In terms of biological role, transfers a GMP moiety from GTP to Mo-molybdopterin (Mo-MPT) cofactor (Moco or molybdenum cofactor) to form Mo-molybdopterin guanine dinucleotide (Mo-MGD) cofactor. The chain is Probable molybdenum cofactor guanylyltransferase from Bacillus cereus (strain B4264).